The chain runs to 394 residues: 1-deoxy-D-xylulose 5-phosphate reductoisomerase (394 aa).

NADPH-binding residues include Thr12, Gly13, Ser14, Ile15, Gly38, Asn41, and Asn132. Residue Lys133 participates in 1-deoxy-D-xylulose 5-phosphate binding. Glu134 is a binding site for NADPH. Asp156 is a Mn(2+) binding site. The 1-deoxy-D-xylulose 5-phosphate site is built by Ser157, Glu158, Ser182, and His205. Glu158 serves as a coordination point for Mn(2+). Gly211 serves as a coordination point for NADPH. 1-deoxy-D-xylulose 5-phosphate is bound by residues Ser218, Asn223, Lys224, and Glu227. Position 227 (Glu227) interacts with Mn(2+).

It belongs to the DXR family. Requires Mg(2+) as cofactor. It depends on Mn(2+) as a cofactor.

The catalysed reaction is 2-C-methyl-D-erythritol 4-phosphate + NADP(+) = 1-deoxy-D-xylulose 5-phosphate + NADPH + H(+). It participates in isoprenoid biosynthesis; isopentenyl diphosphate biosynthesis via DXP pathway; isopentenyl diphosphate from 1-deoxy-D-xylulose 5-phosphate: step 1/6. Catalyzes the NADPH-dependent rearrangement and reduction of 1-deoxy-D-xylulose-5-phosphate (DXP) to 2-C-methyl-D-erythritol 4-phosphate (MEP). The polypeptide is 1-deoxy-D-xylulose 5-phosphate reductoisomerase (Paenarthrobacter aurescens (strain TC1)).